The primary structure comprises 62 residues: Fungus-induced protein 1 (62 aa).

An N-terminal signal peptide occupies residues 1 to 22; it reads MSQNLFQILLIFAILAALQVQG.

This chain is Fungus-induced protein 1, found in Caenorhabditis briggsae.